Here is a 237-residue protein sequence, read N- to C-terminus: KH homology domain-containing protein 1 (237 aa).

A run of 2 helical transmembrane segments spans residues 7–29 (RLFR…FIYG) and 33–50 (LQTL…HLWI). The 60-residue stretch at 96–155 (PMVFHMEEDQEELIFGHGDTYLRCIEVHSHTLIQLESWFTATGQTRVTVVGPHRARQWLL) folds into the KH; atypical domain.

The protein belongs to the KHDC1 family.

It localises to the membrane. In Homo sapiens (Human), this protein is KH homology domain-containing protein 1.